A 214-amino-acid chain; its full sequence is Sugar fermentation stimulation protein homolog (214 aa).

It belongs to the SfsA family.

This Aquifex aeolicus (strain VF5) protein is Sugar fermentation stimulation protein homolog.